The primary structure comprises 194 residues: Imidazoleglycerol-phosphate dehydratase (194 aa).

The protein belongs to the imidazoleglycerol-phosphate dehydratase family.

The protein localises to the cytoplasm. It carries out the reaction D-erythro-1-(imidazol-4-yl)glycerol 3-phosphate = 3-(imidazol-4-yl)-2-oxopropyl phosphate + H2O. The protein operates within amino-acid biosynthesis; L-histidine biosynthesis; L-histidine from 5-phospho-alpha-D-ribose 1-diphosphate: step 6/9. This is Imidazoleglycerol-phosphate dehydratase from Methanothermobacter thermautotrophicus (strain ATCC 29096 / DSM 1053 / JCM 10044 / NBRC 100330 / Delta H) (Methanobacterium thermoautotrophicum).